The chain runs to 58 residues: Photosystem II reaction center X protein (58 aa).

The chain crosses the membrane as a helical span at residues 27–47; sequence IGSFLAAAAFIVVPAASFLIW.

It belongs to the PsbX family. Type 2 subfamily. PSII consists of a core antenna complex that captures photons, and an electron transfer chain that converts photonic excitation into a charge separation. PSII forms dimeric complexes.

The protein localises to the cellular thylakoid membrane. In terms of biological role, involved in the binding and/or turnover of quinones at the Q(B) site of Photosystem II. The polypeptide is Photosystem II reaction center X protein (Prochlorococcus marinus (strain MIT 9211)).